We begin with the raw amino-acid sequence, 427 residues long: Enolase (427 aa).

Glutamine 163 serves as a coordination point for (2R)-2-phosphoglycerate. Glutamate 205 (proton donor) is an active-site residue. Positions 242, 288, and 315 each coordinate Mg(2+). Residues lysine 340, arginine 369, serine 370, and lysine 391 each coordinate (2R)-2-phosphoglycerate. The active-site Proton acceptor is lysine 340.

The protein belongs to the enolase family. It depends on Mg(2+) as a cofactor.

It localises to the cytoplasm. Its subcellular location is the secreted. The protein resides in the cell surface. The catalysed reaction is (2R)-2-phosphoglycerate = phosphoenolpyruvate + H2O. It functions in the pathway carbohydrate degradation; glycolysis; pyruvate from D-glyceraldehyde 3-phosphate: step 4/5. Its function is as follows. Catalyzes the reversible conversion of 2-phosphoglycerate (2-PG) into phosphoenolpyruvate (PEP). It is essential for the degradation of carbohydrates via glycolysis. This Amoebophilus asiaticus (strain 5a2) protein is Enolase.